Reading from the N-terminus, the 321-residue chain is p-hydroxybenzoic acid efflux pump subunit AaeA (321 aa).

A helical membrane pass occupies residues 22–42 (VVITLVIVLCAIVAIFRVWAF).

Belongs to the membrane fusion protein (MFP) (TC 8.A.1) family.

The protein localises to the cell inner membrane. Functionally, forms an efflux pump with AaeB. In Pectobacterium atrosepticum (strain SCRI 1043 / ATCC BAA-672) (Erwinia carotovora subsp. atroseptica), this protein is p-hydroxybenzoic acid efflux pump subunit AaeA.